The primary structure comprises 174 residues: Crossover junction endodeoxyribonuclease RuvC (174 aa).

Active-site residues include aspartate 8, glutamate 67, and aspartate 139. 3 residues coordinate Mg(2+): aspartate 8, glutamate 67, and aspartate 139.

This sequence belongs to the RuvC family. Homodimer which binds Holliday junction (HJ) DNA. The HJ becomes 2-fold symmetrical on binding to RuvC with unstacked arms; it has a different conformation from HJ DNA in complex with RuvA. In the full resolvosome a probable DNA-RuvA(4)-RuvB(12)-RuvC(2) complex forms which resolves the HJ. Mg(2+) is required as a cofactor.

It localises to the cytoplasm. The enzyme catalyses Endonucleolytic cleavage at a junction such as a reciprocal single-stranded crossover between two homologous DNA duplexes (Holliday junction).. Functionally, the RuvA-RuvB-RuvC complex processes Holliday junction (HJ) DNA during genetic recombination and DNA repair. Endonuclease that resolves HJ intermediates. Cleaves cruciform DNA by making single-stranded nicks across the HJ at symmetrical positions within the homologous arms, yielding a 5'-phosphate and a 3'-hydroxyl group; requires a central core of homology in the junction. The consensus cleavage sequence is 5'-(A/T)TT(C/G)-3'. Cleavage occurs on the 3'-side of the TT dinucleotide at the point of strand exchange. HJ branch migration catalyzed by RuvA-RuvB allows RuvC to scan DNA until it finds its consensus sequence, where it cleaves and resolves the cruciform DNA. The chain is Crossover junction endodeoxyribonuclease RuvC from Pseudomonas putida (strain ATCC 700007 / DSM 6899 / JCM 31910 / BCRC 17059 / LMG 24140 / F1).